Here is a 581-residue protein sequence, read N- to C-terminus: Adenine deaminase (581 aa).

The protein belongs to the metallo-dependent hydrolases superfamily. Adenine deaminase family. Mn(2+) serves as cofactor.

The catalysed reaction is adenine + H2O + H(+) = hypoxanthine + NH4(+). This chain is Adenine deaminase, found in Brucella melitensis biotype 1 (strain ATCC 23456 / CCUG 17765 / NCTC 10094 / 16M).